Here is a 151-residue protein sequence, read N- to C-terminus: DNA-directed RNA polymerase RPB6 homolog (151 aa).

Residues 20–44 (ETEEENFVDSEEESEDKSEDKDEIV) show a composition bias toward acidic residues. The interval 20-46 (ETEEENFVDSEEESEDKSEDKDEIVES) is disordered.

This sequence belongs to the archaeal RpoK/eukaryotic RPB6 RNA polymerase subunit family. In terms of assembly, part of the viral DNA-directed RNA polymerase that consists of 8 polII-like subunits (RPB1, RPB2, RPB3, RPB5, RPB6, RPB7, RPB9, RPB10), a capping enzyme and a termination factor.

The protein resides in the host cytoplasm. It localises to the virion. Functionally, component of the DNA-directed RNA polymerase (RNAP) that catalyzes the transcription in the cytoplasm of viral DNA into RNA using the four ribonucleoside triphosphates as substrates. The protein is DNA-directed RNA polymerase RPB6 homolog of African swine fever virus (isolate Tick/Malawi/Lil 20-1/1983) (ASFV).